The sequence spans 154 residues: Protein FAM162A (154 aa).

The segment at 76 to 102 (RFKKEDEIPETVSLEMLDAAKNKMRVK) is required for proapoptotic activity. The chain crosses the membrane as a helical span at residues 103-120 (ISYLMIALTVVGCIFMVI).

It belongs to the UPF0389 family. As to quaternary structure, interacts with HSP90AB1; HSP90AB1 is essential for FAM162A mitochondrial localization and pro-apoptotic activity. Interacts with VDAC2; the interaction is probably involved in inducing mitochondrial permeability transition.

The protein resides in the mitochondrion membrane. Proposed to be involved in regulation of apoptosis; the exact mechanism may differ between cell types/tissues. May be involved in hypoxia-induced cell death of transformed cells implicating cytochrome C release and caspase activation (such as CASP9) and inducing mitochondrial permeability transition. May be involved in hypoxia-induced cell death of neuronal cells probably by promoting release of AIFM1 from mitochondria to cytoplasm and its translocation to the nucleus; however, the involvement of caspases has been reported conflictingly. The chain is Protein FAM162A (FAM162A) from Homo sapiens (Human).